We begin with the raw amino-acid sequence, 288 residues long: Pyrroline-5-carboxylate reductase 3 (288 aa).

The protein belongs to the pyrroline-5-carboxylate reductase family. In terms of assembly, homodecamer; composed of 5 homodimers.

Its subcellular location is the cytoplasm. It catalyses the reaction L-proline + NADP(+) = (S)-1-pyrroline-5-carboxylate + NADPH + 2 H(+). The catalysed reaction is L-proline + NAD(+) = (S)-1-pyrroline-5-carboxylate + NADH + 2 H(+). It participates in amino-acid biosynthesis; L-proline biosynthesis; L-proline from L-glutamate 5-semialdehyde: step 1/1. Functionally, oxidoreductase that catalyzes the last step in proline biosynthesis, which corresponds to the reduction of pyrroline-5-carboxylate (P5C) to L-proline using NAD(P)H. Proline is synthesized from either glutamate or ornithine; both are converted to P5C, and then to proline via pyrroline-5-carboxylate reductases (PYCRs). PYCR3 is exclusively linked to the biosynthesis of proline from ornithine. This Danio rerio (Zebrafish) protein is Pyrroline-5-carboxylate reductase 3.